A 945-amino-acid chain; its full sequence is Leucine--tRNA ligase (945 aa).

Positions 43 to 53 (PYPNGAIHIGH) match the 'HIGH' region motif. The short motif at 638-642 (KMSKS) is the 'KMSKS' region element. Residue Lys641 coordinates ATP.

The protein belongs to the class-I aminoacyl-tRNA synthetase family.

It is found in the cytoplasm. It catalyses the reaction tRNA(Leu) + L-leucine + ATP = L-leucyl-tRNA(Leu) + AMP + diphosphate. This Pyrobaculum aerophilum (strain ATCC 51768 / DSM 7523 / JCM 9630 / CIP 104966 / NBRC 100827 / IM2) protein is Leucine--tRNA ligase.